Consider the following 520-residue polypeptide: Membrane-bound glycerophospholipid O-acyltransferase 2 (520 aa).

Transmembrane regions (helical) follow at residues 22–42 (PIDQ…AIWF), 61–81 (TLLG…HFLV), 88–108 (CIMI…FALG), 184–204 (FMGI…FIEG), 237–257 (LLVC…LPVE), and 264–284 (FQAT…LLAA). Residues Asn342 and His373 contribute to the active site. 3 helical membrane passes run 366-386 (FILS…FLTG), 416-436 (VITW…FVLL), and 444-464 (FYSS…LLLP).

Belongs to the membrane-bound acyltransferase family. As to expression, expressed in neutrophils.

The protein resides in the endoplasmic reticulum membrane. The catalysed reaction is a 1-acyl-sn-glycero-3-phosphocholine + an acyl-CoA = a 1,2-diacyl-sn-glycero-3-phosphocholine + CoA. The enzyme catalyses a 1-acyl-sn-glycero-3-phosphoethanolamine + an acyl-CoA = a 1,2-diacyl-sn-glycero-3-phosphoethanolamine + CoA. It carries out the reaction a 1-acyl-sn-glycero-3-phosphate + an acyl-CoA = a 1,2-diacyl-sn-glycero-3-phosphate + CoA. It catalyses the reaction (9Z)-hexadecenoyl-CoA + 1-hexadecanoyl-sn-glycero-3-phosphocholine = 1-hexadecanoyl-2-(9Z-hexadecenoyl)-sn-glycero-3-phosphocholine + CoA. The catalysed reaction is 1-hexadecanoyl-sn-glycero-3-phosphoethanolamine + (9Z)-octadecenoyl-CoA = 1-hexadecanoyl-2-(9Z-octadecenoyl)-sn-glycero-3-phosphoethanolamine + CoA. The enzyme catalyses 1-hexadecanoyl-sn-glycero-3-phosphoethanolamine + (9Z)-hexadecenoyl-CoA = 1-hexadecanoyl-2-(9Z)-hexadecenoyl-sn-glycero-3-phosphoethanolamine + CoA. It carries out the reaction 1-(9Z-octadecenoyl)-sn-glycero-3-phospho-L-serine + hexadecanoyl-CoA = 1-(9Z)-octadecenoyl-2-hexadecanoyl-sn-glycero-3-phosphoserine + CoA. It catalyses the reaction (9Z,12Z)-octadecadienoyl-CoA + 1-hexadecanoyl-sn-glycero-3-phosphocholine = 1-hexadecanoyl-2-(9Z,12Z-octadecadienoyl)-sn-glycero-3-phosphocholine + CoA. The catalysed reaction is 1-hexadecanoyl-sn-glycero-3-phosphocholine + (9Z)-octadecenoyl-CoA = 1-hexadecanoyl-2-(9Z-octadecenoyl)-sn-glycero-3-phosphocholine + CoA. The enzyme catalyses 1-hexadecanoyl-sn-glycero-3-phosphate + (9Z)-hexadecenoyl-CoA = 1-hexadecanoyl-2-[(9Z)-hexadec-9-enoyl]-sn-glycero-3-phosphate + CoA. It carries out the reaction 1-hexadecanoyl-sn-glycero-3-phosphate + (9Z)-octadecenoyl-CoA = 1-hexadecanoyl-2-(9Z-octadecenoyl)-sn-glycero-3-phosphate + CoA. It catalyses the reaction a 1-O-(1Z-alkenyl)-sn-glycero-3-phosphocholine + (9Z)-octadecenoyl-CoA = 1-O-(1Z)-alkenyl-2-(9Z)-octadecenoyl-sn-glycero-3-phosphocholine + CoA. The catalysed reaction is a 1-O-(1Z-alkenyl)-sn-glycero-3-phosphoethanolamine + (9Z)-octadecenoyl-CoA = 1-O-(1Z)-alkenyl-2-(9Z)-octadecenoyl-sn-glycero-3-phosphoethanolamine + CoA. The enzyme catalyses 1-octadecanoyl-sn-glycero-3-phosphoethanolamine + (9Z)-octadecenoyl-CoA = 1-octadecanoyl-2-(9Z-octadecenoyl)-sn-glycero-3-phosphoethanolamine + CoA. It carries out the reaction 1-octadecanoyl-sn-glycero-3-phosphocholine + (9Z)-octadecenoyl-CoA = 1-octadecanoyl-2-(9Z-octadecenoyl)-sn-glycero-3-phosphocholine + CoA. It catalyses the reaction 1-(9Z-octadecenoyl)-sn-glycero-3-phosphoethanolamine + (9Z)-octadecenoyl-CoA = 1,2-di-(9Z-octadecenoyl)-sn-glycero-3-phosphoethanolamine + CoA. It participates in lipid metabolism; phospholipid metabolism. With respect to regulation, partially inhibited by thimerosal. Functionally, acyltransferase which catalyzes the transfer of an acyl group from an acyl-CoA to a lysophospholipid leading to the production of a phospholipid and participates in the reacylation step of the phospholipid remodeling pathway also known as the Lands cycle. Catalyzes preferentially the acylation of lysophosphatidylethanolamine (1-acyl-sn-glycero-3-phosphoethanolamine or LPE) and lysophosphatidic acid (LPA) and to a lesser extend lysophosphatidylcholine (LPC) and lysophosphatidylserine (LPS). Prefers oleoyl-CoA as the acyl donor. May be involved in chondrocyte differentiation. The chain is Membrane-bound glycerophospholipid O-acyltransferase 2 from Homo sapiens (Human).